The following is an 896-amino-acid chain: Histone-lysine N-methyltransferase CLF (896 aa).

Disordered stretches follow at residues 344–419 (DNLK…NRRI) and 459–514 (SGIK…DGCD). Residues 358 to 390 (GSSGQKTKSQQSESSSTARVSSESSESEVQLLS) are compositionally biased toward low complexity. Polar residues-rich tracts occupy residues 391–400 (NKSPQHSPGL), 465–476 (VVSSQCNSPSTR), and 485–498 (QMENNSSFVDAQSD). The segment covering 504-514 (NNEHSATDGCD) has biased composition (basic and acidic residues). One can recognise a CXC domain in the interval 633-732 (RKRITERKDQ…TLGVPNQRGD (100 aa)). The SET domain occupies 747-862 (QRVLLGRSDV…AGEELFYDYR (116 aa)). Tyr861 contributes to the S-adenosyl-L-methionine binding site. Basic and acidic residues predominate over residues 869 to 884 (PAWARKPEGPGAKDDA). The segment at 869 to 896 (PAWARKPEGPGAKDDAQPSTGRAKKLAH) is disordered.

The protein belongs to the class V-like SAM-binding methyltransferase superfamily. Histone-lysine methyltransferase family. EZ subfamily. In terms of assembly, interacts with FIE1. Component of the polycomb repressive complex 2 (PRC2), composed of the core PRC2 components FIE2, EMF2B and EZ1. PRC2 methylates 'Lys-27' residues of histone H3 (H3K27me3), leading to transcriptional repression of the affected target gene. In terms of tissue distribution, widely expressed. Highly expressed in young panicle.

The enzyme catalyses L-lysyl(27)-[histone H3] + 3 S-adenosyl-L-methionine = N(6),N(6),N(6)-trimethyl-L-lysyl(27)-[histone H3] + 3 S-adenosyl-L-homocysteine + 3 H(+). Polycomb group (PcG) protein. Catalytic subunit of some PcG multiprotein complex, which methylates 'Lys-27' of histone H3, leading to transcriptional repression of the affected target genes. PcG proteins act by forming multiprotein complexes, which are required to maintain the transcriptionally repressive state of homeotic genes throughout development. PcG proteins are not required to initiate repression, but to maintain it during later stages of development. Involved in the regulation of flowering. Represses flowering under long day (LD) conditions. Regulates the trimethylation on histone H3 'Lys-27' (H3K27me3) of the flowering regulators MADS14, MADS15, RFT1, EHD1, HD3A and LF. The chain is Histone-lysine N-methyltransferase CLF from Oryza sativa subsp. japonica (Rice).